A 352-amino-acid chain; its full sequence is Phenylalanine--tRNA ligase alpha subunit (352 aa).

E258 contributes to the Mg(2+) binding site.

Belongs to the class-II aminoacyl-tRNA synthetase family. Phe-tRNA synthetase alpha subunit type 1 subfamily. Tetramer of two alpha and two beta subunits. Requires Mg(2+) as cofactor.

The protein localises to the cytoplasm. It catalyses the reaction tRNA(Phe) + L-phenylalanine + ATP = L-phenylalanyl-tRNA(Phe) + AMP + diphosphate + H(+). The sequence is that of Phenylalanine--tRNA ligase alpha subunit from Staphylococcus epidermidis (strain ATCC 35984 / DSM 28319 / BCRC 17069 / CCUG 31568 / BM 3577 / RP62A).